A 141-amino-acid polypeptide reads, in one-letter code: Globin, extracellular monomeric (141 aa).

The 141-residue stretch at 1–141 (ECDALQRFKV…LGVITGAIHD (141 aa)) folds into the Globin domain. The cysteines at positions 2 and 131 are disulfide-linked. A heme b-binding site is contributed by His-94.

This sequence belongs to the globin family. In terms of assembly, the giant hemoglobins of worms are formed of a monomeric subunit and a disulfide-bonded trimer. This subunit is monomeric.

It localises to the secreted. In Tubifex tubifex (Sludge worm), this protein is Globin, extracellular monomeric.